Reading from the N-terminus, the 237-residue chain is Phosphoribosylaminoimidazole-succinocarboxamide synthase (237 aa).

Belongs to the SAICAR synthetase family.

It carries out the reaction 5-amino-1-(5-phospho-D-ribosyl)imidazole-4-carboxylate + L-aspartate + ATP = (2S)-2-[5-amino-1-(5-phospho-beta-D-ribosyl)imidazole-4-carboxamido]succinate + ADP + phosphate + 2 H(+). Its pathway is purine metabolism; IMP biosynthesis via de novo pathway; 5-amino-1-(5-phospho-D-ribosyl)imidazole-4-carboxamide from 5-amino-1-(5-phospho-D-ribosyl)imidazole-4-carboxylate: step 1/2. The sequence is that of Phosphoribosylaminoimidazole-succinocarboxamide synthase from Cronobacter sakazakii (strain ATCC BAA-894) (Enterobacter sakazakii).